The chain runs to 1342 residues: WD repeat-containing protein 19 (1342 aa).

6 WD repeats span residues 11 to 51 (TWLG…RSEI), 52 to 92 (NLPG…TSQL), 95 to 134 (GMRD…KIPV), 137 to 175 (KHTK…IRQT), 273 to 311 (NHKD…DMYV), and 317 to 356 (EENK…LGDA). TPR repeat units follow at residues 736–769 (AQDL…AKHL), 775–808 (PFIS…DNKE), 840–873 (RVLK…DKAA), 895–928 (PKIH…QSVI), 951–984 (LDGA…NEAF), and 1020–1053 (EKRY…EDNV).

Component of the IFT complex A (IFT-A) complex. IFT-A complex is divided into a core subcomplex composed of IFT122:IFT140:WDR19 which is associated with TULP3 and a peripheral subcomplex composed of IFT43:WDR35:TTC21B. Interacts (via C-terminal region) with IFT122 (via C-terminal region). Interacts with BBS1. Interacts with TTC25. As to expression, some isoforms are tissue-specific. Highly expressed in the prostate. Lower expression in the cerebellum, pituitary gland, fetal lung, and pancreas. In normal prostate, expressed in both basal and luminal epithelial cells. No expression detected in fibromuscular stromal cells, endothelial cells, or infiltrating lymphocytes. Uniformed expression in prostate adenocarcinoma cells.

The protein localises to the cell projection. It localises to the cilium. It is found in the cytoplasm. The protein resides in the cytoskeleton. Its subcellular location is the cilium basal body. The protein localises to the photoreceptor outer segment. It localises to the flagellum. In terms of biological role, as component of the IFT complex A (IFT-A), a complex required for retrograde ciliary transport and entry into cilia of G protein-coupled receptors (GPCRs), it is involved in cilia function and/or assembly. Essential for functional IFT-A assembly and ciliary entry of GPCRs. Associates with the BBSome complex to mediate ciliary transport. This is WD repeat-containing protein 19 from Homo sapiens (Human).